The following is a 389-amino-acid chain: Chorismate synthase (389 aa).

Residues arginine 40 and arginine 46 each coordinate NADP(+). FMN contacts are provided by residues 130-132, 251-252, glycine 297, 312-316, and arginine 338; these read RAS, QA, and KPIST.

The protein belongs to the chorismate synthase family. Homotetramer. FMNH2 is required as a cofactor.

It carries out the reaction 5-O-(1-carboxyvinyl)-3-phosphoshikimate = chorismate + phosphate. It functions in the pathway metabolic intermediate biosynthesis; chorismate biosynthesis; chorismate from D-erythrose 4-phosphate and phosphoenolpyruvate: step 7/7. Catalyzes the anti-1,4-elimination of the C-3 phosphate and the C-6 proR hydrogen from 5-enolpyruvylshikimate-3-phosphate (EPSP) to yield chorismate, which is the branch point compound that serves as the starting substrate for the three terminal pathways of aromatic amino acid biosynthesis. This reaction introduces a second double bond into the aromatic ring system. The polypeptide is Chorismate synthase (Solibacter usitatus (strain Ellin6076)).